The primary structure comprises 694 residues: Elongation factor G (694 aa).

In terms of domain architecture, tr-type G spans 8 to 285; the sequence is EKVRNIGIAA…AVVELLPSPQ (278 aa). GTP-binding positions include 17–24, 81–85, and 135–138; these read AHIDAGKT, DTPGH, and NKMD.

Belongs to the TRAFAC class translation factor GTPase superfamily. Classic translation factor GTPase family. EF-G/EF-2 subfamily.

The protein resides in the cytoplasm. Catalyzes the GTP-dependent ribosomal translocation step during translation elongation. During this step, the ribosome changes from the pre-translocational (PRE) to the post-translocational (POST) state as the newly formed A-site-bound peptidyl-tRNA and P-site-bound deacylated tRNA move to the P and E sites, respectively. Catalyzes the coordinated movement of the two tRNA molecules, the mRNA and conformational changes in the ribosome. In Synechococcus sp. (strain ATCC 27144 / PCC 6301 / SAUG 1402/1) (Anacystis nidulans), this protein is Elongation factor G (fusA).